The primary structure comprises 657 residues: Probable potassium transport system protein Kup (657 aa).

Residues 1 to 25 form a disordered region; that stretch reads MGSGPADEEHTVDTEPGVSPPRRTV. The next 12 membrane-spanning stretches (helical) occupy residues 35 to 55, 77 to 97, 127 to 147, 165 to 185, 196 to 216, 234 to 254, 275 to 295, 315 to 335, 365 to 385, 394 to 414, 422 to 442, and 447 to 467; these read VVVG…IYTI, VVSL…VLLV, TAVL…DSMI, PGLE…LFSV, LFGP…VSGI, FFFG…LAVT, WLVL…ALLL, WPMV…VITG, IYVP…VFAF, AFGM…FYIV, LWLV…FLAA, and LVHG…VMTT.

Belongs to the HAK/KUP transporter (TC 2.A.72) family.

It localises to the cell membrane. It carries out the reaction K(+)(in) + H(+)(in) = K(+)(out) + H(+)(out). Its function is as follows. Transport of potassium into the cell. Likely operates as a K(+):H(+) symporter. The protein is Probable potassium transport system protein Kup of Rhodococcus jostii (strain RHA1).